The primary structure comprises 843 residues: Protein P (843 aa).

The interval 1–177 (MPLSYQHFRK…FCGSPYSWEQ (177 aa)) is terminal protein domain (TP). A spacer region spans residues 178-346 (ELQHGRLVFQ…YCLSHIVNLL (169 aa)). A polymerase/reverse transcriptase domain (RT) region spans residues 347–690 (EDWGPCTEHG…YMNLYPVARQ (344 aa)). The region spanning 357–600 (EHHIRIPRTP…YSLNFMGYVI (244 aa)) is the Reverse transcriptase domain. Mg(2+) contacts are provided by D429, D551, and D552.

It belongs to the hepadnaviridae P protein family.

The catalysed reaction is DNA(n) + a 2'-deoxyribonucleoside 5'-triphosphate = DNA(n+1) + diphosphate. It carries out the reaction Endonucleolytic cleavage to 5'-phosphomonoester.. With respect to regulation, activated by host HSP70 and HSP40 in vitro to be able to bind the epsilon loop of the pgRNA. Because deletion of the RNase H region renders the protein partly chaperone-independent, the chaperones may be needed indirectly to relieve occlusion of the RNA-binding site by this domain. Inhibited by several reverse-transcriptase inhibitors: Lamivudine, Adefovir and Entecavir. Multifunctional enzyme that converts the viral RNA genome into dsDNA in viral cytoplasmic capsids. This enzyme displays a DNA polymerase activity that can copy either DNA or RNA templates, and a ribonuclease H (RNase H) activity that cleaves the RNA strand of RNA-DNA heteroduplexes in a partially processive 3'- to 5'-endonucleasic mode. Neo-synthesized pregenomic RNA (pgRNA) are encapsidated together with the P protein, and reverse-transcribed inside the nucleocapsid. Initiation of reverse-transcription occurs first by binding the epsilon loop on the pgRNA genome, and is initiated by protein priming, thereby the 5'-end of (-)DNA is covalently linked to P protein. Partial (+)DNA is synthesized from the (-)DNA template and generates the relaxed circular DNA (RC-DNA) genome. After budding and infection, the RC-DNA migrates in the nucleus, and is converted into a plasmid-like covalently closed circular DNA (cccDNA). The activity of P protein does not seem to be necessary for cccDNA generation, and is presumably released from (+)DNA by host nuclear DNA repair machinery. The polypeptide is Protein P (Homo sapiens (Human)).